Consider the following 207-residue polypeptide: LexA repressor (207 aa).

The segment at residues Arg28–Lys48 is a DNA-binding region (H-T-H motif). Residues Ser124 and Lys161 each act as for autocatalytic cleavage activity in the active site.

It belongs to the peptidase S24 family. Homodimer.

It carries out the reaction Hydrolysis of Ala-|-Gly bond in repressor LexA.. Its function is as follows. Represses a number of genes involved in the response to DNA damage (SOS response), including recA and lexA. In the presence of single-stranded DNA, RecA interacts with LexA causing an autocatalytic cleavage which disrupts the DNA-binding part of LexA, leading to derepression of the SOS regulon and eventually DNA repair. The polypeptide is LexA repressor (Aeromonas salmonicida (strain A449)).